A 360-amino-acid chain; its full sequence is Photosystem II protein D1 (360 aa).

3 helical membrane-spanning segments follow: residues 29–46, 118–133, and 142–156; these read YIGWFGCLMFPTLLSAIS, HFFIGVCAYIGREWEL, and WICVAFSAPVAAAAA. H118 is a binding site for chlorophyll a. Y126 is a binding site for pheophytin a. [CaMn4O5] cluster is bound by residues D170 and E189. A helical membrane pass occupies residues 197 to 218; sequence FHMLGVAGVFGGSLFSAMHGSL. H198 is a chlorophyll a binding site. A quinone is bound by residues H215 and 264–265; that span reads SF. H215 serves as a coordination point for Fe cation. A Fe cation-binding site is contributed by H272. A helical transmembrane segment spans residues 274–288; the sequence is FLGAWPVVGIWFTAM. 4 residues coordinate [CaMn4O5] cluster: H332, E333, D342, and A344. Positions 345–360 are excised as a propeptide; the sequence is AGESLPVALVAPAVAA.

This sequence belongs to the reaction center PufL/M/PsbA/D family. As to quaternary structure, PSII is composed of 1 copy each of membrane proteins PsbA, PsbB, PsbC, PsbD, PsbE, PsbF, PsbH, PsbI, PsbJ, PsbK, PsbL, PsbM, PsbT, PsbX, PsbY, PsbZ, Psb30/Ycf12, at least 3 peripheral proteins of the oxygen-evolving complex and a large number of cofactors. It forms dimeric complexes. The D1/D2 heterodimer binds P680, chlorophylls that are the primary electron donor of PSII, and subsequent electron acceptors. It shares a non-heme iron and each subunit binds pheophytin, quinone, additional chlorophylls, carotenoids and lipids. D1 provides most of the ligands for the Mn4-Ca-O5 cluster of the oxygen-evolving complex (OEC). There is also a Cl(-1) ion associated with D1 and D2, which is required for oxygen evolution. The PSII complex binds additional chlorophylls, carotenoids and specific lipids. serves as cofactor. Tyr-161 forms a radical intermediate that is referred to as redox-active TyrZ, YZ or Y-Z. In terms of processing, C-terminally processed by CTPA; processing is essential to allow assembly of the oxygen-evolving complex and thus photosynthetic growth.

The protein resides in the plastid. It localises to the chloroplast thylakoid membrane. The enzyme catalyses 2 a plastoquinone + 4 hnu + 2 H2O = 2 a plastoquinol + O2. Its function is as follows. Photosystem II (PSII) is a light-driven water:plastoquinone oxidoreductase that uses light energy to abstract electrons from H(2)O, generating O(2) and a proton gradient subsequently used for ATP formation. It consists of a core antenna complex that captures photons, and an electron transfer chain that converts photonic excitation into a charge separation. The D1/D2 (PsbA/PsbD) reaction center heterodimer binds P680, the primary electron donor of PSII as well as several subsequent electron acceptors. This is Photosystem II protein D1 from Emiliania huxleyi (Coccolithophore).